We begin with the raw amino-acid sequence, 346 residues long: Senescence-specific cysteine protease SAG12 (346 aa).

The N-terminal stretch at 1 to 25 (MALKHMQIFLFVAIFSSFCFSITLS) is a signal peptide. The N-linked (GlcNAc...) asparagine glycan is linked to N124. 3 disulfides stabilise this stretch: C151–C192, C185–C225, and C283–C335. The active site involves C154. The active site involves H289. A glycan (N-linked (GlcNAc...) asparagine) is linked at N301. N310 is a catalytic residue.

This sequence belongs to the peptidase C1 family. In terms of tissue distribution, found in senescent leaves, especially in senescence-associated vacuoles- (SAVs) containing cells (e.g. mesophyll and guard cells), and in senescencing ovules of unfertilised pistils.

The protein localises to the vacuole. Its function is as follows. Cysteine protease that may have a developmental senescence specific cell death function during apoptosis, heavy metal detoxification, and hypersensitive response. In Arabidopsis thaliana (Mouse-ear cress), this protein is Senescence-specific cysteine protease SAG12.